The following is a 251-amino-acid chain: PF03932 family protein CutC (251 aa).

It belongs to the CutC family.

The protein resides in the cytoplasm. This is PF03932 family protein CutC from Erwinia tasmaniensis (strain DSM 17950 / CFBP 7177 / CIP 109463 / NCPPB 4357 / Et1/99).